Reading from the N-terminus, the 816-residue chain is H(+)/Cl(-) exchange transporter 5 (816 aa).

The Cytoplasmic portion of the chain corresponds to 1–124; the sequence is MAMWQGAMDN…WALIHSVSDA (124 aa). 2 helical membrane-spanning segments follow: residues 125-162 and 208-231; these read FSGWLLMLLIGLLSGSLAGLIDISAHWMTDLKEGICTG and VNYFMYVLWALLFAFLAVSLVKAF. The Selectivity filter part_1 signature appears at 237–241; it reads GSGIP. A chloride-binding site is contributed by Ser238. The helical intramembrane region spans 240 to 247; it reads IPEIKTIL. 2 helical membrane passes run 256-275 and 281-300; these read LGKWTLVIKTITLVLAVSSG and EGPLVHVACCCGNILCHCFN. The Selectivity filter part_2 signature appears at 279–283; the sequence is GKEGP. Intramembrane regions (helical) lie at residues 312–324 and 328–336; these read VLSAAAAAGVSVA and PIGGVLFSL. A run of 5 helical transmembrane segments spans residues 348–366, 389–414, 422–442, 498–518, and 523–542; these read LWRSFFAALVAAFTLRSIN, LVPFIVLGIFGGLWGALFIRTNIAWC, LGKYPVVEVLIVTAITAILAF, MWQLALTLILKIVITIFTFGM, and GLFIPSMAVGAIAGRLLGVG. The Selectivity filter part_3 signature appears at 523-527; the sequence is GLFIP. A chloride-binding site is contributed by Phe525. Residues 570 to 584 constitute an intramembrane region (helical); it reads GLYAMVGAAACLGGV. The segment at residues 585 to 587 is an intramembrane region (note=Loop between two helices); that stretch reads TRM. Positions 588–599 form an intramembrane region, helical; it reads TVSLVVIMFELT. The segment at residues 600-604 is an intramembrane region (note=Loop between two helices); sequence GGLEY. A helical membrane pass occupies residues 605–622; that stretch reads IVPLMAAAMTSKWVADAL. At 623–816 the chain is on the cytoplasmic side; the sequence is GREGIYDAHI…NQDPDSILFN (194 aa). Residue Tyr628 participates in chloride binding. CBS domains follow at residues 656-720 and 752-812; these read MKPR…ARKK and ILDL…DPDS. Residues Thr666, 687–689, and 794–797 contribute to the ATP site; these read YSG and TKKD.

It belongs to the chloride channel (TC 2.A.49) family. ClC-5/CLCN5 subfamily. Interacts with NEDD4 and NEDD4L. Ubiquitinated by NEDD4L in the presence of albumin; which promotes endocytosis and proteasomal degradation. Kidney specific.

It localises to the golgi apparatus membrane. The protein resides in the endosome membrane. The protein localises to the cell membrane. The catalysed reaction is 2 chloride(in) + H(+)(out) = 2 chloride(out) + H(+)(in). Its function is as follows. Proton-coupled chloride transporter. Functions as antiport system and exchanges chloride ions against protons. Important for normal acidification of the endosome lumen. May play an important role in renal tubular function. The CLC channel family contains both chloride channels and proton-coupled anion transporters that exchange chloride or another anion for protons. The absence of conserved gating glutamate residues is typical for family members that function as channels. The sequence is that of H(+)/Cl(-) exchange transporter 5 (Clcn5) from Mus musculus (Mouse).